The sequence spans 432 residues: Adenylosuccinate synthetase (432 aa).

GTP contacts are provided by residues 13–19 (GDEGKGK) and 41–43 (GHT). Residue Asp14 is the Proton acceptor of the active site. Mg(2+)-binding residues include Asp14 and Gly41. IMP contacts are provided by residues 14–17 (DEGK), 39–42 (NAGH), Thr130, Arg144, Gln225, Thr240, and Arg304. Catalysis depends on His42, which acts as the Proton donor. 300 to 306 (STTGRRR) serves as a coordination point for substrate. GTP-binding positions include Arg306, 332–334 (KID), and 415–417 (STG).

Belongs to the adenylosuccinate synthetase family. Homodimer. It depends on Mg(2+) as a cofactor.

The protein localises to the cytoplasm. The catalysed reaction is IMP + L-aspartate + GTP = N(6)-(1,2-dicarboxyethyl)-AMP + GDP + phosphate + 2 H(+). Its pathway is purine metabolism; AMP biosynthesis via de novo pathway; AMP from IMP: step 1/2. Functionally, plays an important role in the de novo pathway of purine nucleotide biosynthesis. Catalyzes the first committed step in the biosynthesis of AMP from IMP. The protein is Adenylosuccinate synthetase of Blochmanniella pennsylvanica (strain BPEN).